A 59-amino-acid chain; its full sequence is Potassium channel toxin alpha-KTx 15.5 (59 aa).

The N-terminal stretch at methionine 1–cysteine 22 is a signal peptide. Glutamine 23 is modified (pyrrolidone carboxylic acid). 3 cysteine pairs are disulfide-bonded: cysteine 30–cysteine 50, cysteine 35–cysteine 55, and cysteine 39–cysteine 57.

Belongs to the short scorpion toxin superfamily. Potassium channel inhibitor family. Alpha-KTx 15 subfamily. As to expression, expressed by the venom gland.

The protein resides in the secreted. In terms of biological role, blocker of A-type voltage-gated potassium channels of cerebellar granular cells. May also inhibit Kv4/KCND when coexpressed with DPP6 or DPP10. The occlusion of the outer entry of the K(+) conducting pore is partially reversible and affects both open and closed channels. It shares the same target in rat brain than BmTX3 (AC Q8I0L5) and AmmTX3 (AC P60208). This chain is Potassium channel toxin alpha-KTx 15.5, found in Androctonus australis (Sahara scorpion).